A 151-amino-acid polypeptide reads, in one-letter code: UPF0178 protein YaiI (151 aa).

This sequence belongs to the UPF0178 family.

The chain is UPF0178 protein YaiI from Salmonella paratyphi C (strain RKS4594).